We begin with the raw amino-acid sequence, 544 residues long: Chaperonin GroEL (544 aa).

Residues 30 to 33 (TLGP), Lys51, 87 to 91 (DGTTT), Gly415, and Asp496 each bind ATP.

It belongs to the chaperonin (HSP60) family. In terms of assembly, forms a cylinder of 14 subunits composed of two heptameric rings stacked back-to-back. Interacts with the co-chaperonin GroES.

Its subcellular location is the cytoplasm. It carries out the reaction ATP + H2O + a folded polypeptide = ADP + phosphate + an unfolded polypeptide.. Its function is as follows. Together with its co-chaperonin GroES, plays an essential role in assisting protein folding. The GroEL-GroES system forms a nano-cage that allows encapsulation of the non-native substrate proteins and provides a physical environment optimized to promote and accelerate protein folding. The polypeptide is Chaperonin GroEL (Granulibacter bethesdensis (strain ATCC BAA-1260 / CGDNIH1)).